Consider the following 174-residue polypeptide: Large ribosomal subunit protein bL12cz (174 aa).

The transit peptide at 1 to 45 directs the protein to the chloroplast; the sequence is MASTTFSSAFSILSLPSSSPSPPPSPPRTLPVANRRRRAAAVAST. Residues 1–46 are disordered; it reads MASTTFSSAFSILSLPSSSPSPPPSPPRTLPVANRRRRAAAVASTA. Residues 7-18 are compositionally biased toward low complexity; it reads SSAFSILSLPSS. The segment covering 19-29 has biased composition (pro residues); that stretch reads SPSPPPSPPRT.

This sequence belongs to the bacterial ribosomal protein bL12 family.

The protein resides in the plastid. It is found in the chloroplast. The sequence is that of Large ribosomal subunit protein bL12cz (RPL12-1) from Secale cereale (Rye).